A 436-amino-acid chain; its full sequence is Methylenetetrahydrofolate--tRNA-(uracil-5-)-methyltransferase TrmFO (436 aa).

11–16 (GAGLAG) lines the FAD pocket.

This sequence belongs to the MnmG family. TrmFO subfamily. FAD serves as cofactor.

The protein resides in the cytoplasm. The catalysed reaction is uridine(54) in tRNA + (6R)-5,10-methylene-5,6,7,8-tetrahydrofolate + NADH + H(+) = 5-methyluridine(54) in tRNA + (6S)-5,6,7,8-tetrahydrofolate + NAD(+). It catalyses the reaction uridine(54) in tRNA + (6R)-5,10-methylene-5,6,7,8-tetrahydrofolate + NADPH + H(+) = 5-methyluridine(54) in tRNA + (6S)-5,6,7,8-tetrahydrofolate + NADP(+). In terms of biological role, catalyzes the folate-dependent formation of 5-methyl-uridine at position 54 (M-5-U54) in all tRNAs. The polypeptide is Methylenetetrahydrofolate--tRNA-(uracil-5-)-methyltransferase TrmFO (Shouchella clausii (strain KSM-K16) (Alkalihalobacillus clausii)).